A 790-amino-acid chain; its full sequence is Histone-lysine N-methyltransferase, H3 lysine-9 specific SUVH6 (790 aa).

Residues 251-271 (QLRILGVGTSSGSSSGDSSRN) form a disordered region. Residues 256-268 (GVGTSSGSSSGDS) show a composition bias toward low complexity. One can recognise a YDG domain in the interval 330–482 (GEVPGVEVGD…MNVFKFQLRR (153 aa)). One can recognise a Pre-SET domain in the interval 551 to 613 (KSCCCTTRCT…SCYLRVTQHG (63 aa)). Cys-553, Cys-554, Cys-555, Cys-559, Cys-567, Cys-569, Cys-595, Cys-599, Cys-601, and Cys-605 together coordinate Zn(2+). The region spanning 616-760 (LPLEIFKTKS…PLQELCYDYN (145 aa)) is the SET domain. S-adenosyl-L-methionine is bound by residues 626 to 628 (RGW), Asp-662, Tyr-664, Arg-714, and 717 to 718 (NH). Positions 720, 778, 780, and 785 each coordinate Zn(2+). One can recognise a Post-SET domain in the interval 774 to 790 (KQKPCFCGAAVCRRRLY).

Belongs to the class V-like SAM-binding methyltransferase superfamily. Histone-lysine methyltransferase family. Suvar3-9 subfamily.

The protein resides in the nucleus. The protein localises to the chromosome. It is found in the centromere. The enzyme catalyses N(6)-methyl-L-lysyl(9)-[histone H3] + S-adenosyl-L-methionine = N(6),N(6)-dimethyl-L-lysyl(9)-[histone H3] + S-adenosyl-L-homocysteine + H(+). It catalyses the reaction L-lysyl(9)-[histone H3] + S-adenosyl-L-methionine = N(6)-methyl-L-lysyl(9)-[histone H3] + S-adenosyl-L-homocysteine + H(+). Histone methyltransferase. Methylates 'Lys-9' of histone H3. H3 'Lys-9' methylation represents a specific tag for epigenetic transcriptional repression. Seems to act preferentially on dsMRNA. This Arabidopsis thaliana (Mouse-ear cress) protein is Histone-lysine N-methyltransferase, H3 lysine-9 specific SUVH6 (SUVH6).